Here is a 206-residue protein sequence, read N- to C-terminus: Ras-related protein Rab-18 (206 aa).

Residue M1 is modified to N-acetylmethionine. Positions 17, 20, 21, 22, 23, 34, 35, 40, 66, 123, and 125 each coordinate GTP. Residue S22 participates in Mg(2+) binding. 2 consecutive short sequence motifs (switch) follow at residues 31 to 45 and 63 to 80; these read DTFD…GVDF and DTAG…YYRG. T40 is a binding site for Mg(2+). Residue S144 is modified to Phosphoserine. GTP is bound at residue A152. A lipid anchor (S-palmitoyl cysteine) is attached at C199. Residue C203 is modified to Cysteine methyl ester. C203 carries the S-geranylgeranyl cysteine lipid modification. Residues 204–206 constitute a propeptide, removed in mature form; it reads SVL.

The protein belongs to the small GTPase superfamily. Rab family. As to quaternary structure, interacts (in GTP-bound form) with ZFYVE1. Interacts with ZW10 and this interaction is enhanced in the presence of ZFYVE1. Interacts with BSCL2. Requires Mg(2+) as cofactor.

The protein resides in the endoplasmic reticulum membrane. The protein localises to the golgi apparatus. Its subcellular location is the cis-Golgi network membrane. It is found in the lipid droplet. It localises to the apical cell membrane. It catalyses the reaction GTP + H2O = GDP + phosphate + H(+). Regulated by guanine nucleotide exchange factors (GEFs) which promote the exchange of bound GDP for free GTP. Regulated by GTPase activating proteins (GAPs) which increase the GTP hydrolysis activity at the ER membrane. Inhibited by GDP dissociation inhibitors (GDIs) which prevent Rab-GDP dissociation. In terms of biological role, the small GTPases Rab are key regulators of intracellular membrane trafficking, from the formation of transport vesicles to their fusion with membranes. Rabs cycle between an inactive GDP-bound form and an active GTP-bound form that is able to recruit to membranes different sets of downstream effectors directly responsible for vesicle formation, movement, tethering and fusion. RAB18 is required for the localization of ZFYVE1 to lipid droplets and for its function in mediating the formation of endoplasmic reticulum-lipid droplets (ER-LD) contacts. Also required for maintaining endoplasmic reticulum structure. Plays a role in apical endocytosis/recycling. Plays a key role in eye and brain development and neurodegeneration. In Rattus norvegicus (Rat), this protein is Ras-related protein Rab-18.